Consider the following 483-residue polypeptide: Glutamyl-tRNA(Gln) amidotransferase subunit A (483 aa).

Active-site charge relay system residues include Lys-77 and Ser-152. Residue Ser-176 is the Acyl-ester intermediate of the active site.

It belongs to the amidase family. GatA subfamily. As to quaternary structure, heterotrimer of A, B and C subunits.

The enzyme catalyses L-glutamyl-tRNA(Gln) + L-glutamine + ATP + H2O = L-glutaminyl-tRNA(Gln) + L-glutamate + ADP + phosphate + H(+). Its function is as follows. Allows the formation of correctly charged Gln-tRNA(Gln) through the transamidation of misacylated Glu-tRNA(Gln) in organisms which lack glutaminyl-tRNA synthetase. The reaction takes place in the presence of glutamine and ATP through an activated gamma-phospho-Glu-tRNA(Gln). The protein is Glutamyl-tRNA(Gln) amidotransferase subunit A of Listeria innocua serovar 6a (strain ATCC BAA-680 / CLIP 11262).